Reading from the N-terminus, the 890-residue chain is DNA mismatch repair protein MutS (890 aa).

An ATP-binding site is contributed by 607–614; the sequence is GPNMSGKS.

This sequence belongs to the DNA mismatch repair MutS family.

Functionally, this protein is involved in the repair of mismatches in DNA. It is possible that it carries out the mismatch recognition step. This protein has a weak ATPase activity. The chain is DNA mismatch repair protein MutS from Bacillus thuringiensis subsp. konkukian (strain 97-27).